The sequence spans 273 residues: Chaperone protein PsaB (273 aa).

Positions 1–31 (MKNLFFSAYKKVFSYITSIVIFMVSLPYAYS) are cleaved as a signal peptide. Cys-128 and Cys-163 are joined by a disulfide.

The protein belongs to the periplasmic pilus chaperone family.

It is found in the periplasm. Required for the biogenesis of the pH 6 antigen. The sequence is that of Chaperone protein PsaB (psaB) from Yersinia pestis.